Reading from the N-terminus, the 268-residue chain is Tetraspanin-5 (268 aa).

Residues 1-17 are Cytoplasmic-facing; the sequence is MSGKHYKGPEVSCCIKY. Residues 18-38 traverse the membrane as a helical segment; it reads FIFGFNVIFWFLGITFLGIGL. At 39 to 61 the chain is on the extracellular side; sequence WAWNEKGVLSNISSITDLGGFDP. The N-linked (GlcNAc...) asparagine glycan is linked to asparagine 49. A helical membrane pass occupies residues 62–82; that stretch reads VWLFLVVGGVMFILGFAGCIG. The Cytoplasmic portion of the chain corresponds to 83-92; it reads ALRENTFLLK. Residues 93–113 form a helical membrane-spanning segment; it reads FFSVFLGIIFFLELTAGVLAF. Residues 114–232 lie on the Extracellular side of the membrane; sequence VFKDWIKDQL…PQFEKWLQDN (119 aa). 4 disulfides stabilise this stretch: cysteine 153/cysteine 221, cysteine 154/cysteine 186, cysteine 170/cysteine 180, and cysteine 187/cysteine 200. Residues asparagine 169 and asparagine 174 are each glycosylated (N-linked (GlcNAc...) asparagine). Asparagine 232 carries N-linked (GlcNAc...) asparagine glycosylation. The chain crosses the membrane as a helical span at residues 233–253; that stretch reads LTIVAGIFIGIALLQIFGICL. Residues 254–268 lie on the Cytoplasmic side of the membrane; sequence AQNLVSDIEAVRASW.

This sequence belongs to the tetraspanin (TM4SF) family. In terms of assembly, interacts with ADAM10; the interaction influences ADAM10 substrate specificity, endocytosis and turnover. Palmitoylated.

It localises to the cell membrane. In terms of biological role, part of TspanC8 subgroup, composed of 6 members that interact with the transmembrane metalloprotease ADAM10. This interaction is required for ADAM10 exit from the endoplasmic reticulum and for enzymatic maturation and trafficking to the cell surface as well as substrate specificity. Different TspanC8/ADAM10 complexes have distinct substrates. Promotes ADAM10-mediated cleavage of CD44. Seems to regulate VE-cadherin expression in endothelial cells probably through interaction with ADAM10, promoting leukocyte transmigration. The chain is Tetraspanin-5 from Homo sapiens (Human).